The chain runs to 138 residues: Putative nickel-responsive regulator (138 aa).

Residues histidine 80, histidine 91, histidine 93, and cysteine 99 each coordinate Ni(2+).

The protein belongs to the transcriptional regulatory CopG/NikR family. Ni(2+) is required as a cofactor.

Transcriptional regulator. The polypeptide is Putative nickel-responsive regulator (Campylobacter hominis (strain ATCC BAA-381 / DSM 21671 / CCUG 45161 / LMG 19568 / NCTC 13146 / CH001A)).